The following is a 406-amino-acid chain: Probable UDP-arabinose 4-epimerase 3 (406 aa).

At 1–26 (MIPLNRRASQTRGGMEYFDARRKPHN) the chain is on the cytoplasmic side. Residues 27–44 (VGKVIAALVLTTLCIFIL) form a helical; Signal-anchor for type II membrane protein membrane-spanning segment. The Lumenal segment spans residues 45 to 406 (KQSPGFGGSS…KSHPRGYGSN (362 aa)). 65–96 (HVLVTGGAGYIGSHASLRLLKDNYRVTIVDNL) is a binding site for NAD(+). The Proton acceptor role is filled by Tyr213.

This sequence belongs to the NAD(P)-dependent epimerase/dehydratase family. It depends on NAD(+) as a cofactor.

It localises to the golgi apparatus. Its subcellular location is the golgi stack membrane. It carries out the reaction UDP-beta-L-arabinopyranose = UDP-alpha-D-xylose. It functions in the pathway nucleotide-sugar biosynthesis; UDP-L-arabinose biosynthesis; UDP-L-arabinose from UDP-alpha-D-xylose: step 1/1. Its pathway is cell wall biogenesis; cell wall polysaccharide biosynthesis. The sequence is that of Probable UDP-arabinose 4-epimerase 3 (UEL-3) from Oryza sativa subsp. japonica (Rice).